A 583-amino-acid polypeptide reads, in one-letter code: Trehalase (583 aa).

The signal sequence occupies residues 1–23 (MPGRTWELCLLLLLGLGLGSQEA). An N-linked (GlcNAc...) asparagine glycan is attached at Asn78. Residues Arg168, 175-176 (WD), Asn212, and 221-223 (RSQ) each bind substrate. Asn239 and Asn261 each carry an N-linked (GlcNAc...) asparagine glycan. Substrate contacts are provided by residues 286–288 (RPE) and Gly319. Asp321 functions as the Proton donor/acceptor in the catalytic mechanism. Asn369 is a glycosylation site (N-linked (GlcNAc...) asparagine). Glu514 (proton donor/acceptor) is an active-site residue. Glu529 contacts substrate. Ser556 is lipidated: GPI-anchor amidated serine. Positions 557 to 583 (GAKLAFLEPHCLAATLLPSLLLSLLPW) are cleaved as a propeptide — removed in mature form.

This sequence belongs to the glycosyl hydrolase 37 family. In terms of assembly, homodimer; disulfide-linked. As to expression, expressed in kidney, liver and small intestine. Also more weakly expressed in pancreas.

It localises to the cell membrane. It carries out the reaction alpha,alpha-trehalose + H2O = alpha-D-glucose + beta-D-glucose. Its function is as follows. Intestinal trehalase is probably involved in the hydrolysis of ingested trehalose. The polypeptide is Trehalase (Homo sapiens (Human)).